A 23-amino-acid polypeptide reads, in one-letter code: Conotoxin as25a (23 aa).

Proline 4 carries the post-translational modification 4-hydroxyproline; partial. The residue at position 23 (proline 23) is a 4-hydroxyproline; partial; alternate. Proline 23 bears the Proline amide; alternate mark.

The name as25b given in PubMed:23474143 corresponds to the hydroxylated peptide. The amidation of the C-terminus of this hydroxylated peptide is not directly confirmed. Post-translationally, contains 3 disulfide bonds. As to expression, expressed by the venom duct.

It is found in the secreted. Its function is as follows. Upon intracranial injection in mice, as25a (the toxin without the two 4-hydroxyprolines) provokes paralysis of the hind limbs and death with a dose of 240 pmol. The sequence is that of Conotoxin as25a from Conus cancellatus (Cancellate cone).